A 199-amino-acid polypeptide reads, in one-letter code: Stress response protein SCP2 (199 aa).

This sequence belongs to the CAPAB/TerDEXZ family.

It is found in the cytoplasm. In Bacillus subtilis (strain 168), this protein is Stress response protein SCP2 (yceC).